The following is a 208-amino-acid chain: Adenylyl-sulfate kinase (208 aa).

Residue 35-42 coordinates ATP; it reads GLSGSGKS. Ser109 acts as the Phosphoserine intermediate in catalysis.

It belongs to the APS kinase family.

The catalysed reaction is adenosine 5'-phosphosulfate + ATP = 3'-phosphoadenylyl sulfate + ADP + H(+). Its pathway is sulfur metabolism; hydrogen sulfide biosynthesis; sulfite from sulfate: step 2/3. In terms of biological role, catalyzes the synthesis of activated sulfate. This chain is Adenylyl-sulfate kinase, found in Geotalea uraniireducens (strain Rf4) (Geobacter uraniireducens).